The chain runs to 283 residues: Large ribosomal subunit protein uL4 (283 aa).

Belongs to the universal ribosomal protein uL4 family. As to quaternary structure, part of the 50S ribosomal subunit.

In terms of biological role, one of the primary rRNA binding proteins, this protein initially binds near the 5'-end of the 23S rRNA. It is important during the early stages of 50S assembly. It makes multiple contacts with different domains of the 23S rRNA in the assembled 50S subunit and ribosome. Forms part of the polypeptide exit tunnel. This chain is Large ribosomal subunit protein uL4, found in Pyrobaculum aerophilum (strain ATCC 51768 / DSM 7523 / JCM 9630 / CIP 104966 / NBRC 100827 / IM2).